Reading from the N-terminus, the 404-residue chain is NADH-quinone oxidoreductase subunit D 1 (404 aa).

The protein belongs to the complex I 49 kDa subunit family. NDH-1 is composed of 14 different subunits. Subunits NuoB, C, D, E, F, and G constitute the peripheral sector of the complex.

It localises to the cell membrane. It catalyses the reaction a quinone + NADH + 5 H(+)(in) = a quinol + NAD(+) + 4 H(+)(out). Its function is as follows. NDH-1 shuttles electrons from NADH, via FMN and iron-sulfur (Fe-S) centers, to quinones in the respiratory chain. The immediate electron acceptor for the enzyme in this species is believed to be a menaquinone. Couples the redox reaction to proton translocation (for every two electrons transferred, four hydrogen ions are translocated across the cytoplasmic membrane), and thus conserves the redox energy in a proton gradient. The protein is NADH-quinone oxidoreductase subunit D 1 of Symbiobacterium thermophilum (strain DSM 24528 / JCM 14929 / IAM 14863 / T).